The sequence spans 98 residues: ATP synthase subunit alpha, chloroplastic (98 aa).

The protein belongs to the ATPase alpha/beta chains family. F-type ATPases have 2 components, CF(1) - the catalytic core - and CF(0) - the membrane proton channel. CF(1) has five subunits: alpha(3), beta(3), gamma(1), delta(1), epsilon(1). CF(0) has four main subunits: a, b, b' and c.

Its subcellular location is the plastid. It is found in the chloroplast thylakoid membrane. It carries out the reaction ATP + H2O + 4 H(+)(in) = ADP + phosphate + 5 H(+)(out). Functionally, produces ATP from ADP in the presence of a proton gradient across the membrane. The alpha chain is a regulatory subunit. This is ATP synthase subunit alpha, chloroplastic (atpA) from Populus euphratica (Euphrates poplar).